Here is a 395-residue protein sequence, read N- to C-terminus: E3 ubiquitin-protein ligase NHLRC1 (395 aa).

An RING-type zinc finger spans residues 26 to 72; sequence CKVCFEKFGHRQQRRPRNLSCGHVVCLACVAALAHPRTLALECPFCR. NHL repeat units follow at residues 113-157, 161-204, 205-245, 248-300, 301-349, and 350-393; these read ALTC…FDSG, AHQF…FDFF, GQIK…LDVD, EGVL…FSSS, MQLV…LGKP, and EEFP…YKVD.

Interacts with AGL. Interacts (via the NHL repeats) with EPM2A/laforin. Forms a complex with EPM2A/laforin and HSP70. Interacts with PRDM8. In terms of tissue distribution, expressed in brain, cerebellum, spinal cord, medulla, heart, liver, skeletal muscle and pancreas.

The protein localises to the endoplasmic reticulum. The protein resides in the nucleus. The enzyme catalyses S-ubiquitinyl-[E2 ubiquitin-conjugating enzyme]-L-cysteine + [acceptor protein]-L-lysine = [E2 ubiquitin-conjugating enzyme]-L-cysteine + N(6)-ubiquitinyl-[acceptor protein]-L-lysine.. It participates in protein modification; protein ubiquitination. In terms of biological role, E3 ubiquitin-protein ligase. Together with the phosphatase EPM2A/laforin, appears to be involved in the clearance of toxic polyglucosan and protein aggregates via multiple pathways. In complex with EPM2A/laforin and HSP70, suppresses the cellular toxicity of misfolded proteins by promoting their degradation through the ubiquitin-proteasome system (UPS). Ubiquitinates the glycogen-targeting protein phosphatase subunits PPP1R3C/PTG and PPP1R3D in a laforin-dependent manner and targets them for proteasome-dependent degradation, thus decreasing glycogen accumulation. Polyubiquitinates EPM2A/laforin and ubiquitinates AGL and targets them for proteasome-dependent degradation. Also promotes proteasome-independent protein degradation through the macroautophagy pathway. This is E3 ubiquitin-protein ligase NHLRC1 (NHLRC1) from Homo sapiens (Human).